The following is a 475-amino-acid chain: Kynureninase (475 aa).

Residues Leu142, Thr143, 170-173, Asp255, His258, and Tyr280 each bind pyridoxal 5'-phosphate; that span reads FPSD. Residue Lys281 is modified to N6-(pyridoxal phosphate)lysine. Pyridoxal 5'-phosphate is bound by residues Trp320 and Asn348.

Belongs to the kynureninase family. As to quaternary structure, homodimer. Pyridoxal 5'-phosphate is required as a cofactor.

It localises to the cytoplasm. It carries out the reaction L-kynurenine + H2O = anthranilate + L-alanine + H(+). The enzyme catalyses 3-hydroxy-L-kynurenine + H2O = 3-hydroxyanthranilate + L-alanine + H(+). It functions in the pathway amino-acid degradation; L-kynurenine degradation; L-alanine and anthranilate from L-kynurenine: step 1/1. Its pathway is cofactor biosynthesis; NAD(+) biosynthesis; quinolinate from L-kynurenine: step 2/3. In terms of biological role, catalyzes the cleavage of L-kynurenine (L-Kyn) and L-3-hydroxykynurenine (L-3OHKyn) into anthranilic acid (AA) and 3-hydroxyanthranilic acid (3-OHAA), respectively. This is Kynureninase (bna5) from Botryotinia fuckeliana (strain B05.10) (Noble rot fungus).